The chain runs to 448 residues: Proteases secretion protein PrtE (448 aa).

The Cytoplasmic portion of the chain corresponds to 1–30; sequence MTGMDITTQDELNEAAMRDRASRDEERALR. Residues 31–50 traverse the membrane as a helical segment; the sequence is LGWWLVLAGFGGFLLWALLA. At 51-448 the chain is on the periplasmic side; the sequence is PLDKGVAVQG…DRMHLALTEE (398 aa).

Belongs to the membrane fusion protein (MFP) (TC 8.A.1) family.

The protein localises to the cell inner membrane. Functionally, involved in the secretion of proteases A, B, C and G. The sequence is that of Proteases secretion protein PrtE (prtE) from Dickeya chrysanthemi (Pectobacterium chrysanthemi).